The sequence spans 519 residues: Acetylcholine receptor subunit gamma (519 aa).

A signal peptide spans 1-22; it reads MQGGQRPHLLLLLLAVCLGAQS. Residues 23-240 are Extracellular-facing; sequence RNQEERLLAD…VVFYLLIQRK (218 aa). Residues Asn-52 and Asn-163 are each glycosylated (N-linked (GlcNAc...) asparagine). A disulfide bridge connects residues Cys-150 and Cys-164. 3 consecutive transmembrane segments (helical) span residues 241–265, 274–292, and 308–329; these read PLFY…IYFL, CTVA…FLVA, and YLTF…VLNV. The Cytoplasmic segment spans residues 330–476; sequence SLRSPHTHSM…WLLVGRVLDR (147 aa). The chain crosses the membrane as a helical span at residues 477–497; the sequence is VCFLAMLSLFICGTAGIFLMA.

Belongs to the ligand-gated ion channel (TC 1.A.9) family. Acetylcholine receptor (TC 1.A.9.1) subfamily. Gamma/CHRNG sub-subfamily. In terms of assembly, pentamer of two alpha chains, and one each of the beta, delta, and gamma (in immature muscle) or epsilon (in mature muscle) chains. In terms of tissue distribution, at least in myotubes of skeletal muscle.

The protein localises to the postsynaptic cell membrane. It is found in the cell membrane. It catalyses the reaction K(+)(in) = K(+)(out). The enzyme catalyses Na(+)(in) = Na(+)(out). In terms of biological role, after binding acetylcholine, the AChR responds by an extensive change in conformation that affects all subunits and leads to opening of an ion-conducting channel across the plasma membrane. This chain is Acetylcholine receptor subunit gamma (Chrng), found in Mus musculus (Mouse).